The primary structure comprises 309 residues: Testis-expressed protein 264 homolog (309 aa).

At Met1–Asp3 the chain is on the lumenal side. The chain crosses the membrane as a helical; Signal-anchor for type III membrane protein span at residues Leu4–Phe24. Residues Ala25–Glu309 are Cytoplasmic-facing. A disordered region spans residues Pro193–Glu309. Over residues Ala208–Ser225 the composition is skewed to low complexity. 2 positions are modified to phosphoserine: Ser238 and Ser243. Positions Gly250–Tyr262 are enriched in basic and acidic residues. Positions Ser263–Phe272 are enriched in low complexity. An LIR motif motif is present at residues Phe272–Leu275.

In terms of assembly, interacts (via the LIR motif) with ATG8 family proteins MAP1LC3A, MAP1LC3B, GABARAP and GABARAPL1. Interacts with VCP/p97; bridging VCP/p97 to covalent DNA-protein cross-links (DPCs). Interacts with TOP1 (when sumoylated).

It localises to the endoplasmic reticulum membrane. Its subcellular location is the cytoplasmic vesicle. It is found in the autophagosome. The protein resides in the cytoplasm. The protein localises to the cytosol. It localises to the nucleus. Its subcellular location is the chromosome. Functionally, major reticulophagy (also called ER-phagy) receptor that acts independently of other candidate reticulophagy receptors to remodel subdomains of the endoplasmic reticulum into autophagosomes upon nutrient stress, which then fuse with lysosomes for endoplasmic reticulum turnover. The ATG8-containing isolation membrane (IM) cradles a tubular segment of TEX264-positive ER near a three-way junction, allowing the formation of a synapse of 2 juxtaposed membranes with trans interaction between the TEX264 and ATG8 proteins. Expansion of the IM would extend the capture of ER, possibly through a 'zipper-like' process involving continued trans TEX264-ATG8 interactions, until poorly understood mechanisms lead to the fission of relevant membranes and, ultimately, autophagosomal membrane closure. Also involved in the repair of covalent DNA-protein cross-links (DPCs) during DNA synthesis: acts by bridging VCP/p97 to covalent DNA-protein cross-links (DPCs) and initiating resolution of DPCs by SPRTN. The sequence is that of Testis-expressed protein 264 homolog from Mus musculus (Mouse).